Here is a 301-residue protein sequence, read N- to C-terminus: ATP synthase gamma chain (301 aa).

Belongs to the ATPase gamma chain family. As to quaternary structure, F-type ATPases have 2 components, CF(1) - the catalytic core - and CF(0) - the membrane proton channel. CF(1) has five subunits: alpha(3), beta(3), gamma(1), delta(1), epsilon(1). CF(0) has three main subunits: a, b and c.

Its subcellular location is the cell inner membrane. Its function is as follows. Produces ATP from ADP in the presence of a proton gradient across the membrane. The gamma chain is believed to be important in regulating ATPase activity and the flow of protons through the CF(0) complex. This Helicobacter pylori (strain Shi470) protein is ATP synthase gamma chain.